The primary structure comprises 267 residues: 4-hydroxy-tetrahydrodipicolinate reductase (267 aa).

NAD(+) is bound by residues 8-13 and E34; that span reads GAAGRM. R35 is an NADP(+) binding site. Residues 98–100 and 122–125 each bind NAD(+); these read GST and APNM. Residue H155 is the Proton donor/acceptor of the active site. Position 156 (H156) interacts with (S)-2,3,4,5-tetrahydrodipicolinate. The active-site Proton donor is K159. 165-166 serves as a coordination point for (S)-2,3,4,5-tetrahydrodipicolinate; the sequence is GT.

The protein belongs to the DapB family.

The protein localises to the cytoplasm. It carries out the reaction (S)-2,3,4,5-tetrahydrodipicolinate + NAD(+) + H2O = (2S,4S)-4-hydroxy-2,3,4,5-tetrahydrodipicolinate + NADH + H(+). The enzyme catalyses (S)-2,3,4,5-tetrahydrodipicolinate + NADP(+) + H2O = (2S,4S)-4-hydroxy-2,3,4,5-tetrahydrodipicolinate + NADPH + H(+). It participates in amino-acid biosynthesis; L-lysine biosynthesis via DAP pathway; (S)-tetrahydrodipicolinate from L-aspartate: step 4/4. Functionally, catalyzes the conversion of 4-hydroxy-tetrahydrodipicolinate (HTPA) to tetrahydrodipicolinate. In Geotalea uraniireducens (strain Rf4) (Geobacter uraniireducens), this protein is 4-hydroxy-tetrahydrodipicolinate reductase.